The primary structure comprises 97 residues: Large ribosomal subunit protein uL23 (97 aa).

It belongs to the universal ribosomal protein uL23 family. In terms of assembly, part of the 50S ribosomal subunit. Contacts protein L29, and trigger factor when it is bound to the ribosome.

In terms of biological role, one of the early assembly proteins it binds 23S rRNA. One of the proteins that surrounds the polypeptide exit tunnel on the outside of the ribosome. Forms the main docking site for trigger factor binding to the ribosome. In Limosilactobacillus fermentum (strain NBRC 3956 / LMG 18251) (Lactobacillus fermentum), this protein is Large ribosomal subunit protein uL23.